The sequence spans 274 residues: Elongation factor Ts (274 aa).

The segment at 79-82 (TDFV) is involved in Mg(2+) ion dislocation from EF-Tu.

The protein belongs to the EF-Ts family.

It is found in the cytoplasm. Its function is as follows. Associates with the EF-Tu.GDP complex and induces the exchange of GDP to GTP. It remains bound to the aminoacyl-tRNA.EF-Tu.GTP complex up to the GTP hydrolysis stage on the ribosome. The polypeptide is Elongation factor Ts (Porphyromonas gingivalis (strain ATCC 33277 / DSM 20709 / CIP 103683 / JCM 12257 / NCTC 11834 / 2561)).